The following is a 457-amino-acid chain: MSNLAPEPEFQQAYNELVHSLRDQNSSRLPQILRLLCLSSPPERVIQFRVTWEDDKGNFQVNRGYRVQFNSALGPYKGGLRFHPTVNLSILKFLGFEQTFKNALTGLNMGGGKGGSDFDPKGKSDNEIRRFCYSFMRELSKHIGQFTDVPAGDIGVGGREIGYLFGAYESYKNQFEGVLTGKGITWGGSLIRPEATGYGLVYYVAHMISYASGGKETFAGKRVAISGSGNVAQYAALKVLELGGKVITLSDSKGALIATGEEGFNETDIELIAKLKLDRGYLTQLHAAEDSFKSRFKYLPGERPWCHVDKVDVALPSATQNEVSEQEAKELIASGCKFLAEGSNMGSTQEAINVYEEDRKSRKADGLWYGPAKAANCGGVAVSGLEMAQNSQRLTWTSEQVDKELAGIMERCFWNCLNPAKEYFDIAEGELPSLVAGANIAGYVKVVNAMKAQGDWW.

The active site involves K113.

Belongs to the Glu/Leu/Phe/Val dehydrogenases family. As to quaternary structure, homohexamer.

It catalyses the reaction L-glutamate + NADP(+) + H2O = 2-oxoglutarate + NH4(+) + NADPH + H(+). This chain is NADP-specific glutamate dehydrogenase (GDH), found in Tuber borchii (White truffle).